The sequence spans 247 residues: Triosephosphate isomerase (247 aa).

A substrate-binding site is contributed by 10–12 (NWK). Histidine 92 serves as the catalytic Electrophile. The Proton acceptor role is filled by glutamate 164. Substrate contacts are provided by residues glycine 170, serine 209, and 230-231 (GG).

This sequence belongs to the triosephosphate isomerase family. As to quaternary structure, homodimer.

The protein localises to the cytoplasm. The catalysed reaction is D-glyceraldehyde 3-phosphate = dihydroxyacetone phosphate. The protein operates within carbohydrate biosynthesis; gluconeogenesis. It functions in the pathway carbohydrate degradation; glycolysis; D-glyceraldehyde 3-phosphate from glycerone phosphate: step 1/1. Involved in the gluconeogenesis. Catalyzes stereospecifically the conversion of dihydroxyacetone phosphate (DHAP) to D-glyceraldehyde-3-phosphate (G3P). This Alcanivorax borkumensis (strain ATCC 700651 / DSM 11573 / NCIMB 13689 / SK2) protein is Triosephosphate isomerase.